The sequence spans 602 residues: MRQRSKKGMRSKEEVSQLRTPIVCVMGHVDHGKTTLLDRIRGTTVAQYEAGAITQHIGATEIPLSVIQQFCGSGFKANLMVPGLLFIDTPGHHAFTSLRSRGGSLADLAILIVDINEGFQPQTIESINILKRFKTPFVVAANKIDRIPGWRPVENAPMEKSLAGQTERVVETLETKIYELVGELYKYGFDSNRYDRIADFTKTVGIIPVSAITGEGIPDLLLVLVGLAQRFLKQNLVIESSRPGMGTILEVKEERGLGTTLDVILYDGMISVGDTIVVGTPREPIITKVRALLKPRPLKEIRSEERFTPVKHVVAASGIKVSAPKLETALAGSTIRVVGEGEDPEAIAKEIRSEIEAVRIDTDTVGVILKADTIGSLEGLVGELRAKNIPIHVADVGPVTRRDVIRAAAIKDPLLSVILGFNVEILPDALSEIQKLDIPVFQSDVIYTLLESYEEWMEEKKMQMEQERLEAIVKPGCVRILPDCVFRQSKPAIVGVQVVGGTISHNVPLIREDGAVVGTIRGIQQRNENIPMATVGQEVAISIDGPTVGRQIHEGDLLYVNIPEKHARIIEQELKQKMSQDEIEVFEKFLEIKRKKDMFWGR.

The region spanning 18–233 (LRTPIVCVMG…LVGLAQRFLK (216 aa)) is the tr-type G domain. The segment at 27 to 34 (GHVDHGKT) is G1. 27–34 (GHVDHGKT) contacts GTP. A G2 region spans residues 52–56 (AITQH). The G3 stretch occupies residues 88–91 (DTPG). GTP-binding positions include 88–92 (DTPGH) and 142–145 (NKID). The interval 142 to 145 (NKID) is G4. Residues 210–212 (SAI) are G5.

The protein belongs to the TRAFAC class translation factor GTPase superfamily. Classic translation factor GTPase family. IF-2 subfamily.

Functionally, function in general translation initiation by promoting the binding of the formylmethionine-tRNA to ribosomes. Seems to function along with eIF-2. This is Probable translation initiation factor IF-2 from Methanothrix thermoacetophila (strain DSM 6194 / JCM 14653 / NBRC 101360 / PT) (Methanosaeta thermophila).